The primary structure comprises 613 residues: Transcription factor MTB1 (613 aa).

Positions 48–130 (LQNKLSDLVE…RVLQKLHMLF (83 aa)) are JAZ-interaction domain. 2 disordered regions span residues 256-285 (EKNEGNNPRLSNSGAVTERTDGNPKIFGHD) and 391-441 (AHNV…AERQ). A compositionally biased stretch (polar residues) spans 260–270 (GNNPRLSNSGA). Basic and acidic residues-rich tracts occupy residues 394–417 (VESEHSDVEASCKEDRAGPVDEKR) and 427–441 (NGREEPLNHVEAERQ). Residues 430 to 443 (EEPLNHVEAERQRR) form a basic motif; degenerate region. Residues 430–479 (EEPLNHVEAERQRREKLNQRFYALRAVVPNISKMDKASLLGDAIAYITEL) form the bHLH domain. Residues 444 to 479 (EKLNQRFYALRAVVPNISKMDKASLLGDAIAYITEL) form a helix-loop-helix motif region. A disordered region spans residues 490 to 513 (RELRLGSTSRDAITSEDSPSSEIQ). Over residues 495-512 (GSTSRDAITSEDSPSSEI) the composition is skewed to polar residues.

In terms of assembly, interacts with MYC2 (via N-terminus). MTB1 competes with MED25 for binding to MYC2. Interacts (via N-terminus) with JAZ7.

It is found in the nucleus. Functionally, transcription factor that negatively regulates jasmonate (JA) signaling. Negatively regulates JA-dependent response to wounding, JA-induced expression of defense genes, JA-dependent responses against herbivorous insects, and JA-dependent resistance against Botrytis cinerea infection. Plays a positive role in resistance against the bacterial pathogen Pseudomonas syringae pv tomato DC3000. This chain is Transcription factor MTB1, found in Solanum lycopersicum (Tomato).